The following is an 882-amino-acid chain: HTH-type transcriptional regulator AlkS (882 aa).

51–58 (APPGYGKT) serves as a coordination point for ATP. An HTH luxR-type domain is found at 815–880 (ENKADALLTR…QATIEAERQG (66 aa)). The H-T-H motif DNA-binding region spans 839 to 858 (NKQIATNMHVTEDAIKWHMR).

The protein operates within hydrocarbon metabolism; alkane degradation. This protein activates the expression of alkBFGHJKL operon in the presence of alkanes. The polypeptide is HTH-type transcriptional regulator AlkS (alkS) (Ectopseudomonas oleovorans (Pseudomonas oleovorans)).